Here is a 71-residue protein sequence, read N- to C-terminus: MGIIDTFVITAVTVIIFCLLIYAAYKRYKCIPSPDDRDKVLKSTLNDDTLFNQTLTPDQVKALHRLVTSSI.

A helical transmembrane segment spans residues 1-21; sequence MGIIDTFVITAVTVIIFCLLI. Topologically, residues 22–70 are virion surface; that stretch reads YAAYKRYKCIPSPDDRDKVLKSTLNDDTLFNQTLTPDQVKALHRLVTSS.

Belongs to the chordopoxvirinae A13 family.

The protein resides in the virion membrane. Its function is as follows. Essential for the encapsidation of DNA into immature virions (IV) and the subsequent maturation of IV into mature virions (MV). The protein is Virion membrane protein A13 homolog of Vertebrata (FPV).